The following is a 355-amino-acid chain: N-acetyl-gamma-glutamyl-phosphate reductase (355 aa).

The active site involves Cys152.

This sequence belongs to the NAGSA dehydrogenase family. Type 1 subfamily.

Its subcellular location is the cytoplasm. The catalysed reaction is N-acetyl-L-glutamate 5-semialdehyde + phosphate + NADP(+) = N-acetyl-L-glutamyl 5-phosphate + NADPH + H(+). It participates in amino-acid biosynthesis; L-arginine biosynthesis; N(2)-acetyl-L-ornithine from L-glutamate: step 3/4. Its function is as follows. Catalyzes the NADPH-dependent reduction of N-acetyl-5-glutamyl phosphate to yield N-acetyl-L-glutamate 5-semialdehyde. This Psychrobacter cryohalolentis (strain ATCC BAA-1226 / DSM 17306 / VKM B-2378 / K5) protein is N-acetyl-gamma-glutamyl-phosphate reductase.